Consider the following 637-residue polypeptide: PTS system mannitol-specific EIICBA component (637 aa).

Topologically, residues 1 to 23 (MSSDIKIKVQSFGRFLSNMVMPN) are cytoplasmic. Residues 12 to 341 (FGRFLSNMVM…ILLKTSKVKE (330 aa)) form the PTS EIIC type-2 domain. Residues 24-45 (IGAFIAWGIITALFIPTGWLPN) form a helical membrane-spanning segment. Over 46–49 (ETLA) the chain is Periplasmic. A helical transmembrane segment spans residues 50 to 70 (KLVGPMITYLLPLLIGYTGGK). The Cytoplasmic portion of the chain corresponds to 71 to 133 (LVGGERGGVV…SGFEMLVNNF (63 aa)). A helical membrane pass occupies residues 134-155 (SAGIIGMILAILAFLGIGPIVE). Over 156-164 (ALSKMLAAG) the chain is Periplasmic. Residues 165–185 (VNFMVVHDMLPLASIFVEPAK) form a helical membrane-spanning segment. Residues 186-272 (ILFLNNAINH…VLMNPRLILA (87 aa)) lie on the Cytoplasmic side of the membrane. The chain crosses the membrane as a helical span at residues 273–292 (VILGGMTGVFTLTILGGGLV). Over 293 to 312 (SPASPGSILAVLAMTPKGAY) the chain is Periplasmic. A helical membrane pass occupies residues 313-334 (FANIAGVCAAMAVSFVVSAILL). Residues 335-637 (KTSKVKEEDD…EVLELLAGRK (303 aa)) lie on the Cytoplasmic side of the membrane. Residues 378–473 (RKIIVACDAG…RLVAAQRHTA (96 aa)) form the PTS EIIB type-2 domain. Cys-384 serves as the catalytic Phosphocysteine intermediate; for EIIB activity. Cys-384 is subject to Phosphocysteine; by EIIA. The region spanning 494 to 636 (FKLGAENIFL…DEVLELLAGR (143 aa)) is the PTS EIIA type-2 domain. The active-site Tele-phosphohistidine intermediate; for EIIA activity is the His-554. His-554 is modified (phosphohistidine; by HPr).

Homodimer. An intramolecular phosphotransfer takes places between His-554 and Cys-384.

Its subcellular location is the cell inner membrane. It carries out the reaction D-mannitol(out) + N(pros)-phospho-L-histidyl-[protein] = D-mannitol 1-phosphate(in) + L-histidyl-[protein]. Its function is as follows. The phosphoenolpyruvate-dependent sugar phosphotransferase system (sugar PTS), a major carbohydrate active transport system, catalyzes the phosphorylation of incoming sugar substrates concomitantly with their translocation across the cell membrane. This system is involved in D-mannitol transport. Also able to use D-mannonic acid. In Escherichia coli (strain K12), this protein is PTS system mannitol-specific EIICBA component.